Consider the following 284-residue polypeptide: D-tagatose-1,6-bisphosphate aldolase subunit GatY (284 aa).

Asp82 serves as the catalytic Proton donor. Residues His83 and His180 each coordinate Zn(2+). Gly181 contributes to the dihydroxyacetone phosphate binding site. A Zn(2+)-binding site is contributed by His208. Residues 209–211 (GAS) and 230–233 (NVAT) contribute to the dihydroxyacetone phosphate site.

The protein belongs to the class II fructose-bisphosphate aldolase family. TagBP aldolase GatY subfamily. As to quaternary structure, forms a complex with GatZ. Zn(2+) serves as cofactor.

The catalysed reaction is D-tagatofuranose 1,6-bisphosphate = D-glyceraldehyde 3-phosphate + dihydroxyacetone phosphate. The protein operates within carbohydrate metabolism; D-tagatose 6-phosphate degradation; D-glyceraldehyde 3-phosphate and glycerone phosphate from D-tagatose 6-phosphate: step 2/2. Functionally, catalytic subunit of the tagatose-1,6-bisphosphate aldolase GatYZ, which catalyzes the reversible aldol condensation of dihydroxyacetone phosphate (DHAP or glycerone-phosphate) with glyceraldehyde 3-phosphate (G3P) to produce tagatose 1,6-bisphosphate (TBP). Requires GatZ subunit for full activity and stability. Is involved in the catabolism of galactitol. The protein is D-tagatose-1,6-bisphosphate aldolase subunit GatY of Escherichia coli O6:H1 (strain CFT073 / ATCC 700928 / UPEC).